Consider the following 425-residue polypeptide: Zinc finger protein 789 (425 aa).

The KRAB domain occupies 11–82; it reads LSFEDVAMYF…DLPRTGNRKA (72 aa). 8 consecutive C2H2-type zinc fingers follow at residues 201-223, 229-251, 257-279, 285-307, 313-335, 341-363, 369-391, and 397-419; these read YECS…QRIH, FECK…KQCH, YRCH…KRIH, YKCS…QVIH, HKCL…QQIH, HKCS…QRIH, FQCG…QVIH, and YQCV…QGTH.

This sequence belongs to the krueppel C2H2-type zinc-finger protein family.

The protein localises to the nucleus. Its function is as follows. May be involved in transcriptional regulation. This Homo sapiens (Human) protein is Zinc finger protein 789 (ZNF789).